Consider the following 422-residue polypeptide: Serine hydroxymethyltransferase (422 aa).

Residue 121–123 (GHI) participates in (6S)-5,6,7,8-tetrahydrofolate binding. Position 227 is an N6-(pyridoxal phosphate)lysine (Lys-227). Glu-245 provides a ligand contact to (6S)-5,6,7,8-tetrahydrofolate.

It belongs to the SHMT family. Homodimer. It depends on pyridoxal 5'-phosphate as a cofactor.

The protein localises to the cytoplasm. It catalyses the reaction 5,10-methylenetetrahydromethanopterin + glycine + H2O = 5,6,7,8-tetrahydromethanopterin + L-serine. The protein operates within amino-acid biosynthesis; glycine biosynthesis; glycine from L-serine: step 1/1. Catalyzes the reversible interconversion of serine and glycine with tetrahydromethanopterin (H4MPT) serving as the one-carbon carrier. Also exhibits a pteridine-independent aldolase activity toward beta-hydroxyamino acids, producing glycine and aldehydes, via a retro-aldol mechanism. The polypeptide is Serine hydroxymethyltransferase (Methanobrevibacter smithii (strain ATCC 35061 / DSM 861 / OCM 144 / PS)).